We begin with the raw amino-acid sequence, 463 residues long: Cysteine--tRNA ligase (463 aa).

Residue C29 coordinates Zn(2+). Residues 31–41 (PTVYDFAHIGN) carry the 'HIGH' region motif. Positions 227, 252, and 256 each coordinate Zn(2+). A 'KMSKS' region motif is present at residues 285–289 (KMSKS). K288 serves as a coordination point for ATP.

This sequence belongs to the class-I aminoacyl-tRNA synthetase family. Monomer. The cofactor is Zn(2+).

It localises to the cytoplasm. The enzyme catalyses tRNA(Cys) + L-cysteine + ATP = L-cysteinyl-tRNA(Cys) + AMP + diphosphate. The polypeptide is Cysteine--tRNA ligase (Rhodopseudomonas palustris (strain ATCC BAA-98 / CGA009)).